The sequence spans 513 residues: Probable DNA ligase (513 aa).

Glu-213 contacts ATP. The active-site N6-AMP-lysine intermediate is Lys-215. ATP-binding residues include Arg-220, Arg-235, Glu-264, Phe-304, Arg-376, and Lys-382.

It belongs to the ATP-dependent DNA ligase family. It depends on Mg(2+) as a cofactor.

The catalysed reaction is ATP + (deoxyribonucleotide)n-3'-hydroxyl + 5'-phospho-(deoxyribonucleotide)m = (deoxyribonucleotide)n+m + AMP + diphosphate.. DNA ligase that seals nicks in double-stranded DNA during DNA replication, DNA recombination and DNA repair. The chain is Probable DNA ligase from Anaeromyxobacter dehalogenans (strain 2CP-1 / ATCC BAA-258).